A 248-amino-acid polypeptide reads, in one-letter code: 5'-nucleotidase SurE (248 aa).

A divalent metal cation contacts are provided by aspartate 8, aspartate 9, serine 39, and asparagine 91.

The protein belongs to the SurE nucleotidase family. The cofactor is a divalent metal cation.

Its subcellular location is the cytoplasm. It catalyses the reaction a ribonucleoside 5'-phosphate + H2O = a ribonucleoside + phosphate. Nucleotidase that shows phosphatase activity on nucleoside 5'-monophosphates. This chain is 5'-nucleotidase SurE, found in Geotalea daltonii (strain DSM 22248 / JCM 15807 / FRC-32) (Geobacter daltonii).